The primary structure comprises 173 residues: Archaemetzincin (173 aa).

Residue His-130 participates in Zn(2+) binding. Catalysis depends on Glu-131, which acts as the Proton acceptor. Zn(2+)-binding residues include His-134, His-140, Cys-141, Cys-146, Cys-165, and Cys-168.

This sequence belongs to the peptidase M54 family. In terms of assembly, monomer. Requires Zn(2+) as cofactor.

Probable zinc metalloprotease whose natural substrate is unknown. This Haloarcula marismortui (strain ATCC 43049 / DSM 3752 / JCM 8966 / VKM B-1809) (Halobacterium marismortui) protein is Archaemetzincin.